The sequence spans 316 residues: MTRRLKAAIIGSGNIGTDLMIKILRHGKHIDMAAMVGIDPKSDGLARAARLGVATTYEGVAGLIRLPVFADIDFVFDATSAGAHVENDALLRAAKPGIRLVDLTPAAIGPYCIPVVNGDAHLDALNVNMVTCGGQATIPMVAAVSRVARVHYAEIVASIASKSAGPGTRANIDEFTETTAKAIEAVGGATKGKAIIVMNPAEPPLIMRDTVYTLSQPADEEAIAESVERMVAAVQAYVPGYRLKQKVQFDRIDSPLRIPGVGDALKGLKTSIFLEVEGAAHYLPAYAGNLDIMTSAALRTAEHMAQRMLADATVSA.

NAD(+) is bound at residue 12 to 15 (SGNI). C132 acts as the Acyl-thioester intermediate in catalysis. NAD(+) contacts are provided by residues 163–171 (SAGPGTRAN) and N289.

This sequence belongs to the acetaldehyde dehydrogenase family.

It catalyses the reaction acetaldehyde + NAD(+) + CoA = acetyl-CoA + NADH + H(+). The sequence is that of Acetaldehyde dehydrogenase (bphG) from Bordetella avium (strain 197N).